Here is a 412-residue protein sequence, read N- to C-terminus: D-amino acid dehydrogenase 3 (412 aa).

Residue 4 to 18 (IVVIGAGIAGVSTAY) participates in FAD binding.

The protein belongs to the DadA oxidoreductase family. The cofactor is FAD.

The enzyme catalyses a D-alpha-amino acid + A + H2O = a 2-oxocarboxylate + AH2 + NH4(+). Its function is as follows. Oxidative deamination of D-amino acids. This chain is D-amino acid dehydrogenase 3 (dadA3), found in Mesorhizobium japonicum (strain LMG 29417 / CECT 9101 / MAFF 303099) (Mesorhizobium loti (strain MAFF 303099)).